We begin with the raw amino-acid sequence, 188 residues long: dCTP deaminase (188 aa).

DCTP-binding positions include 111–116, 135–137, Gln-156, Tyr-170, Lys-179, and Gln-180; these read KSTYAR and TLE. The Proton donor/acceptor role is filled by Glu-137.

It belongs to the dCTP deaminase family. In terms of assembly, homotrimer.

The catalysed reaction is dCTP + H2O + H(+) = dUTP + NH4(+). It functions in the pathway pyrimidine metabolism; dUMP biosynthesis; dUMP from dCTP (dUTP route): step 1/2. Catalyzes the deamination of dCTP to dUTP. The protein is dCTP deaminase of Rickettsia akari (strain Hartford).